We begin with the raw amino-acid sequence, 395 residues long: tRNA-specific 2-thiouridylase MnmA (395 aa).

Residues 7–14 (GLSGGVDS) and methionine 33 each bind ATP. The interaction with target base in tRNA stretch occupies residues 95–97 (NPD). The active-site Nucleophile is cysteine 100. Cysteine 100 and cysteine 200 are joined by a disulfide. Glycine 124 contributes to the ATP binding site. The segment at 150–152 (KDQ) is interaction with tRNA. Cysteine 200 functions as the Cysteine persulfide intermediate in the catalytic mechanism. Residues 346-347 (RY) are interaction with tRNA.

The protein belongs to the MnmA/TRMU family.

It localises to the cytoplasm. It catalyses the reaction S-sulfanyl-L-cysteinyl-[protein] + uridine(34) in tRNA + AH2 + ATP = 2-thiouridine(34) in tRNA + L-cysteinyl-[protein] + A + AMP + diphosphate + H(+). Its function is as follows. Catalyzes the 2-thiolation of uridine at the wobble position (U34) of tRNA, leading to the formation of s(2)U34. The polypeptide is tRNA-specific 2-thiouridylase MnmA (Christiangramia forsetii (strain DSM 17595 / CGMCC 1.15422 / KT0803) (Gramella forsetii)).